The following is a 368-amino-acid chain: Peptidoglycan-recognition protein LA (368 aa).

Topologically, residues 1–127 are cytoplasmic; sequence MFEENNSPTT…KSPSRRVTRN (127 aa). Disordered stretches follow at residues 21–46 and 101–122; these read QRAS…GLPL and INSN…SPSR. 2 stretches are compositionally biased toward low complexity: residues 33–43 and 102–113; these read TSAGSSTSSSG and NSNNANGNGNAN. A helical transmembrane segment spans residues 128–148; it reads TILLITLILLVLATGLIVLYV. Residues 149 to 368 are Extracellular-facing; sequence ELNRPKPELP…MKTESWDAKQ (220 aa). Cysteines 221 and 227 form a disulfide. The region spanning 233–320 is the N-acetylmuramoyl-L-alanine amidase domain; that stretch reads TIQDSAIAEK…DVDYKLVAQN (88 aa). N-linked (GlcNAc...) asparagine glycosylation is found at N273 and N320.

This sequence belongs to the N-acetylmuramoyl-L-alanine amidase 2 family. In terms of tissue distribution, expressed in uninduced hemocytes and mbn-2 cells.

It is found in the cell membrane. In terms of biological role, peptidoglycan-recognition protein probably involved in innate immunity by binding to peptidoglycans (PGN) of bacteria and activating the immune response. The protein is Peptidoglycan-recognition protein LA (PGRP-LA) of Drosophila melanogaster (Fruit fly).